The primary structure comprises 404 residues: MVRNLRSSEPQKISRFPRHHGEGKKASSPALNLQWPGQKQVASAVAPEMRKRAPPKNNNTSIHRNCRKHLRKEGDWWIVEGGQNHKKAAHSPLKTKPVNKEGNRKKYGRPPREVEGKWLTSLIAATTEAVLRQLGKGKSPTAHTKSNQSRVPLQHSEKTAKGIKYATPQPKKKAHEQRKELPHWPPTKRSHGANKGQGAPVRAPAKTQGKGEEQPHTMRTWAQVAAPKKQKVTSKPPMAQKKKAQGEKKGAAANPFHWELQVEQLLKDAEQIRESMYIRFLHVRQSWWSTCFKAHMEFHCPVCGFAHPEETITVTHCRQQHPGGPPDSLHPDNNRESGAVSQVPPAHFRRWWLSSHIWRKRKISTLLSPKLPVPEQGDYPNARSGIGTGAPHSPHHCDRSAGPP.

2 stretches are compositionally biased toward polar residues: residues 1–11 (MVRNLRSSEPQ) and 29–41 (PALN…QKQV). Disordered stretches follow at residues 1 to 62 (MVRN…NTSI), 86 to 111 (KKAA…GRPP), 134 to 251 (LGKG…KKGA), 317 to 341 (CRQQ…GAVS), and 369 to 404 (PKLP…AGPP). The span at 98 to 111 (VNKEGNRKKYGRPP) shows a compositional bias: basic and acidic residues. Residues 141–151 (TAHTKSNQSRV) show a composition bias toward polar residues. The C2H2-type zinc finger occupies 300–321 (CPVCGFAHPEETITVTHCRQQH). Positions 395 to 404 (HHCDRSAGPP) are enriched in basic and acidic residues.

This chain is Retrotransposable element SLACS 45 kDa protein, found in Trypanosoma brucei gambiense.